The sequence spans 289 residues: ATP synthase gamma chain (289 aa).

Belongs to the ATPase gamma chain family. F-type ATPases have 2 components, CF(1) - the catalytic core - and CF(0) - the membrane proton channel. CF(1) has five subunits: alpha(3), beta(3), gamma(1), delta(1), epsilon(1). CF(0) has three main subunits: a, b and c.

It localises to the cell membrane. Functionally, produces ATP from ADP in the presence of a proton gradient across the membrane. The gamma chain is believed to be important in regulating ATPase activity and the flow of protons through the CF(0) complex. This is ATP synthase gamma chain from Hamiltonella defensa subsp. Acyrthosiphon pisum (strain 5AT).